We begin with the raw amino-acid sequence, 152 residues long: Small heat shock protein HspA (152 aa).

Residues 29–139 (TAGEANYPPC…KPRRIPIDNL (111 aa)) form the sHSP domain.

This sequence belongs to the small heat shock protein (HSP20) family.

This chain is Small heat shock protein HspA (hspA), found in Bradyrhizobium diazoefficiens (strain JCM 10833 / BCRC 13528 / IAM 13628 / NBRC 14792 / USDA 110).